The primary structure comprises 234 residues: Sugar fermentation stimulation protein homolog (234 aa).

This sequence belongs to the SfsA family.

This chain is Sugar fermentation stimulation protein homolog, found in Photobacterium profundum (strain SS9).